Consider the following 1827-residue polypeptide: Phenolphthiocerol/phthiocerol polyketide synthase subunit C (1827 aa).

The region spanning 35 to 461 is the Ketosynthase family 3 (KS3) domain; the sequence is CEPVAVVGIG…GTNAHVVVEQ (427 aa). Catalysis depends on for beta-ketoacyl synthase activity residues cysteine 207, histidine 342, and histidine 383. An acyltransferase region spans residues 566–876; it reads VFVYSGQGSQ…LAAVGVAASE (311 aa). Serine 654 serves as the catalytic For malonyltransferase activity. The N-terminal hotdog fold stretch occupies residues 910 to 1037; that stretch reads HPLLGAHIEM…AKVEQSPREC (128 aa). Residues 910 to 1076 are dehydratase; the sequence is HPLLGAHIEM…QHHGPAFAAL (167 aa). The PKS/mFAS DH domain maps to 910-1198; it reads HPLLGAHIEM…LRRVERRAVP (289 aa). Histidine 942 serves as the catalytic Proton acceptor; for dehydratase activity. The segment at 1050-1198 is C-terminal hotdog fold; sequence GTTVSPADFY…LRRVERRAVP (149 aa). Catalysis depends on aspartate 1111, which acts as the Proton donor; for dehydratase activity. The tract at residues 1439–1617 is beta-ketoacyl reductase; it reads ASYVVTGGLG…VINWGPWSEV (179 aa). An NADP(+)-binding site is contributed by 1440–1485; it reads SYVVTGGLGGLGLVVARWLVDRGAGRVVLGGRSDPTDEQCNVLAEL. The Carrier domain occupies 1706–1785; it reads RAVTERMCAR…DLTADLMRQL (80 aa). At serine 1745 the chain carries O-(pantetheine 4'-phosphoryl)serine.

The cofactor is NADP(+). Requires pantetheine 4'-phosphate as cofactor.

The catalysed reaction is icosanoyl-[(phenol)carboxyphthiodiolenone synthase] + 2 (S)-methylmalonyl-CoA + 3 malonyl-CoA + 5 NADPH + 10 H(+) = C32-carboxyphthiodiolenone-[(phenol)carboxyphthiodiolenone synthase] + 5 CO2 + 5 NADP(+) + 5 CoA + 2 H2O. It carries out the reaction docosanoyl-[(phenol)carboxyphthiodiolenone synthase] + 2 (S)-methylmalonyl-CoA + 3 malonyl-CoA + 5 NADPH + 10 H(+) = C34-carboxyphthiodiolenone-[(phenol)carboxyphthiodiolenone synthase] + 5 CO2 + 5 NADP(+) + 5 CoA + 2 H2O. It catalyses the reaction 17-(4-hydroxyphenyl)heptadecanoyl-[(phenol)carboxyphthiodiolenone synthase] + 2 (S)-methylmalonyl-CoA + 3 malonyl-CoA + 5 NADPH + 10 H(+) = C35-(phenol)carboxyphthiodiolenone-[(phenol)carboxyphthiodiolenone synthase] + 5 CO2 + 5 NADP(+) + 5 CoA + 2 H2O. The enzyme catalyses 19-(4-hydroxyphenyl)nonadecanoyl-[(phenol)carboxyphthiodiolenone synthase] + 2 (S)-methylmalonyl-CoA + 3 malonyl-CoA + 5 NADPH + 10 H(+) = C37-(phenol)carboxyphthiodiolenone-[(phenol)carboxyphthiodiolenone synthase] + 5 CO2 + 5 NADP(+) + 5 CoA + 2 H2O. It participates in lipid metabolism; fatty acid biosynthesis. Part of the PpsABCDE complex involved in the biosynthesis of the lipid core common to phthiocerols and phenolphthiocerols by successive additions of malonyl-CoA or methylmalonyl-CoA extender units. PpsA can accept as substrate the activated forms of either icosanoyl (C20), docosanoyl (C22) or lignoceroyl (C24) groups from FadD26, or a (4-hydroxyphenyl)-C17 or (4-hydroxyphenyl)-C19 fatty acyl from FadD29. PpsA initiates the biosynthesis and extends its substrate using a malonyl-CoA extender unit. The PpsB and PpsC proteins add the second and third malonyl-CoA extender units. PpsD adds an (R)-methylmalonyl unit and PpsE adds a second (R)-methylmalonyl unit. The incorporation of the methylmalonyl units results in formation of two branched methyl groups in the elongated product. In Mycobacterium bovis (strain ATCC BAA-935 / AF2122/97), this protein is Phenolphthiocerol/phthiocerol polyketide synthase subunit C (ppsD).